A 67-amino-acid polypeptide reads, in one-letter code: Epsilon-conotoxin TxVA (67 aa).

An N-terminal signal peptide occupies residues methionine 1–cysteine 19. The propeptide occupies phenylalanine 20–arginine 50. 4-carboxyglutamate is present on residues glutamate 51 and glutamate 54. Intrachain disulfides connect cysteine 52/cysteine 58 and cysteine 53/cysteine 59. 6'-bromotryptophan is present on tryptophan 57. Threonine 60 carries an O-linked (GalNAc...) threonine glycan. The residue at position 63 (proline 63) is a 4-hydroxyproline. The propeptide occupies leucine 64 to arginine 67.

Post-translationally, O-glycan consists of the disaccharide Gal-GalNAc. Expressed by the venom duct.

The protein localises to the secreted. Functionally, epsilon-conotoxins act at presynaptic membranes, blocking the calcium channels or G protein-coupled receptors. Causes hyperactivity upon intracranial injection into mice. Causes dorsal fins drooping in fish. The polypeptide is Epsilon-conotoxin TxVA (Conus textile (Cloth-of-gold cone)).